Reading from the N-terminus, the 120-residue chain is Large ribosomal subunit protein bL17 (120 aa).

Belongs to the bacterial ribosomal protein bL17 family. In terms of assembly, part of the 50S ribosomal subunit. Contacts protein L32.

This is Large ribosomal subunit protein bL17 from Anoxybacillus flavithermus (strain DSM 21510 / WK1).